The sequence spans 215 residues: MRIILLGAPGAGKGTQAQFIMDKFGIPQISTGDMLRAAIIKAGTEMGKQAKSVIDAGQLVSDEIILGLVKERIAQEDCAKGFLLDGFPRTIPQADGLKENGVSIDYVLEFDVADEVIVERMSGRRAHLPSGRTYHVTFNPSKVEGQDDVTGEPLVIREDDKPETVLARLGVYHEQTAPLIAYYTKEAEAGKTEYLKFDGTKLVAEVSAEIEKVLS.

10 to 15 is a binding site for ATP; the sequence is GAGKGT. Positions 30-60 are NMP; sequence STGDMLRAAIIKAGTEMGKQAKSVIDAGQLV. AMP is bound by residues Thr31, Arg36, 58-60, 86-89, and Gln93; these read QLV and GFPR. The interval 123–160 is LID; sequence GRRAHLPSGRTYHVTFNPSKVEGQDDVTGEPLVIREDD. ATP is bound by residues Arg124 and 133–134; that span reads TY. Residues Arg157 and Arg168 each contribute to the AMP site. Lys201 lines the ATP pocket.

Belongs to the adenylate kinase family. Monomer.

It localises to the cytoplasm. It carries out the reaction AMP + ATP = 2 ADP. It participates in purine metabolism; AMP biosynthesis via salvage pathway; AMP from ADP: step 1/1. Functionally, catalyzes the reversible transfer of the terminal phosphate group between ATP and AMP. Plays an important role in cellular energy homeostasis and in adenine nucleotide metabolism. The sequence is that of Adenylate kinase from Aliivibrio salmonicida (strain LFI1238) (Vibrio salmonicida (strain LFI1238)).